Consider the following 127-residue polypeptide: UPF0102 protein Cpha266_0037 (127 aa).

This sequence belongs to the UPF0102 family.

The protein is UPF0102 protein Cpha266_0037 of Chlorobium phaeobacteroides (strain DSM 266 / SMG 266 / 2430).